The sequence spans 621 residues: Threonine--tRNA ligase (621 aa).

An editing domain region spans residues 1–137; that stretch reads MRILQLHCDS…ESSKVVTKDS (137 aa). Residues 128-150 are disordered; it reads ESSKVVTKDSTTKDDDEDTSDAL. A catalytic region spans residues 202 to 501; that stretch reads PHVALMKKLA…SKKGKKPQLP (300 aa). Positions 294, 346, and 470 each coordinate Zn(2+). Over residues 598–612 the composition is skewed to polar residues; sequence QTSGKPYTGLNQSQH. A disordered region spans residues 598-621; that stretch reads QTSGKPYTGLNQSQHLSKRPQLMV.

This sequence belongs to the class-II aminoacyl-tRNA synthetase family. Homodimer. Zn(2+) is required as a cofactor.

It localises to the cytoplasm. It catalyses the reaction tRNA(Thr) + L-threonine + ATP = L-threonyl-tRNA(Thr) + AMP + diphosphate + H(+). Functionally, catalyzes the attachment of threonine to tRNA(Thr) in a two-step reaction: L-threonine is first activated by ATP to form Thr-AMP and then transferred to the acceptor end of tRNA(Thr). Also edits incorrectly charged L-seryl-tRNA(Thr). This chain is Threonine--tRNA ligase, found in Nitrosopumilus maritimus (strain SCM1).